Consider the following 264-residue polypeptide: Myozenin-2 (264 aa).

Arg53 bears the Omega-N-methylarginine mark. Positions 98–134 are disordered; that stretch reads ESGSQQAPFTPPNTPDPRSPPNPENIAPGYSGPLKEI. Phosphoserine is present on Ser101. Over residues 106 to 120 the composition is skewed to pro residues; sequence FTPPNTPDPRSPPNP. Phosphothreonine occurs at positions 107 and 111. Ser116 bears the Phosphoserine mark.

This sequence belongs to the myozenin family. Interacts via its C-terminus with spectrin repeats 3 and 4 of ACTN2. Interacts with ACTN1, LDB3, MYOT and PPP3CA.

The protein localises to the cytoplasm. The protein resides in the myofibril. It localises to the sarcomere. Its subcellular location is the z line. Its function is as follows. Myozenins may serve as intracellular binding proteins involved in linking Z line proteins such as alpha-actinin, gamma-filamin, TCAP/telethonin, LDB3/ZASP and localizing calcineurin signaling to the sarcomere. Plays an important role in the modulation of calcineurin signaling. May play a role in myofibrillogenesis. This is Myozenin-2 (MYOZ2) from Bos taurus (Bovine).